The chain runs to 370 residues: Acyl-CoA:lysophosphatidylglycerol acyltransferase 1 (370 aa).

The chain crosses the membrane as a helical span at residues 22 to 42 (FAFMVVNNLVAIPSYICYVII). The short motif at 101-106 (HQATGD) is the HXXXXD motif element. A helical membrane pass occupies residues 342–362 (LWIFLIQSFAFLSGYMWYNII).

This sequence belongs to the 1-acyl-sn-glycerol-3-phosphate acyltransferase family. As to expression, highly expressed in liver and placenta. Also expressed in peripheral blood, lung, kidney and brain. Detected at lower levels in colon. High expression is detected in brain and testis.

Its subcellular location is the endoplasmic reticulum membrane. It carries out the reaction a 2-acyl-sn-glycero-3-phosphoethanolamine + octadecanoyl-CoA = 1-octadecanoyl-2-acyl-sn-glycero-3-phosphoethanolamine + CoA. It catalyses the reaction 2-(9Z-octadecenoyl)-sn-glycero-3-phosphoethanolamine + octadecanoyl-CoA = 1-octadecanoyl-2-(9Z-octadecenoyl)-sn-glycero-3-phosphoethanolamine + CoA. The catalysed reaction is a 2-acyl-sn-glycero-3-phosphoethanolamine + hexadecanoyl-CoA = 1-hexadecanoyl-2-acyl-sn-glycero-3-phosphoethanolamine + CoA. The enzyme catalyses 2-(9Z-octadecenoyl)-sn-glycero-3-phosphoethanolamine + hexadecanoyl-CoA = 1-hexadecanoyl-2-(9Z-octadecenoyl)-sn-glycero-3-phosphoethanolamine + CoA. It carries out the reaction 1-tetradecanoyl-sn-glycero-3-phospho-(1'-sn-glycerol) + hexadecanoyl-CoA = 1-tetradecanoyl-2-hexadecanoyl-sn-glycero-3-phospho-(1'-sn-glycerol) + CoA. It catalyses the reaction 1-hexadecanoyl-sn-glycero-3-phospho-(1'-sn-glycerol) + dodecanoyl-CoA = 1-hexadecanoyl-2-dodecanoyl-sn-glycero-3-phospho-(1'-sn-glycerol) + CoA. The catalysed reaction is 1-hexadecanoyl-sn-glycero-3-phospho-(1'-sn-glycerol) + hexadecanoyl-CoA = 1,2-dihexadecanoyl-sn-glycero-3-phospho-(1'-sn-glycerol) + CoA. The enzyme catalyses 1-hexadecanoyl-sn-glycero-3-phospho-(1'-sn-glycerol) + octadecanoyl-CoA = 1-hexadecanoyl-2-octadecanoyl-sn-glycero-3-phospho-(1'-sn-glycerol) + CoA. It carries out the reaction 1-octadecanoyl-sn-glycero-3-phospho-(1'-sn-glycerol) + hexadecanoyl-CoA = 1-octadecanoyl-2-hexadecanoyl-sn-glycero-3-phospho-(1'-sn-glycerol) + CoA. It catalyses the reaction 1-(9Z-octadecenoyl)-sn-glycero-3-phospho-(1'-sn-glycerol) + dodecanoyl-CoA = 1-(9Z-octadecenoyl)-2-dodecanoyl-sn-glycero-3-phospho-(1'-sn-glycerol) + CoA. The catalysed reaction is 1-hexadecanoyl-sn-glycero-3-phospho-(1'-sn-glycerol) + (9Z)-octadecenoyl-CoA = 1-hexadecanoyl-2-(9Z-octadecenoyl)-sn-glycero-3-phospho-(1'-sn-glycerol) + CoA. The enzyme catalyses 1-(9Z-octadecenoyl)-sn-glycero-3-phospho-(1'-sn-glycerol) + hexadecanoyl-CoA = 1-(9Z-octadecenoyl)-2-hexadecanoyl-sn-glycero-3-phospho-(1'-sn-glycerol) + CoA. It carries out the reaction 1-(9Z-octadecenoyl)-sn-glycero-3-phospho-(1'-sn-glycerol) + (9Z)-octadecenoyl-CoA = 1,2-di-(9Z-octadecenoyl)-sn-glycero-3-phospho-(1'-sn-glycerol) + CoA. It catalyses the reaction a 2-acylglycerol + an acyl-CoA = a 1,2-diacylglycerol + CoA. The catalysed reaction is a 2-acylglycerol + hexadecanoyl-CoA = a 1-hexadecanoyl-2-acylglycerol + CoA. The enzyme catalyses a 1-acylglycerol + hexadecanoyl-CoA = an hexadecanoyl-acylglycerol + CoA. It carries out the reaction a 2-acyl-sn-glycero-3-phosphocholine + an acyl-CoA = a 1,2-diacyl-sn-glycero-3-phosphocholine + CoA. It catalyses the reaction 2-(9Z-octadecenoyl)-sn-glycero-3-phosphocholine + octadecanoyl-CoA = 1-octadecanoyl-2-(9Z-octadecenoyl)-sn-glycero-3-phosphocholine + CoA. The catalysed reaction is 2-(9Z,12Z-octadecadienoyl)-sn-glycero-3-phosphocholine + octadecanoyl-CoA = 1-octadecanoyl-2-(9Z,12Z)-octadecadienoyl-sn-glycero-3-phosphocholine + CoA. The enzyme catalyses 2-(5Z,8Z,11Z,14Z)-eicosatetraenoyl-sn-glycero-3-phosphocholine + octadecanoyl-CoA = 1-octadecanoyl-2-(5Z,8Z,11Z,14Z-eicosatetraenoyl)-sn-glycero-3-phosphocholine + CoA. It carries out the reaction 2-(9Z-octadecenoyl)-sn-glycero-3-phosphocholine + hexadecanoyl-CoA = 1-hexadecanoyl-2-(9Z-octadecenoyl)-sn-glycero-3-phosphocholine + CoA. It catalyses the reaction 2-(9Z-octadecenoyl)-sn-glycero-3-phospho-L-serine + hexadecanoyl-CoA = 1-hexadecanoyl-2-(9Z-octadecenoyl)-sn-glycero-3-phospho-L-serine + CoA. The catalysed reaction is 2-(4Z,7Z,10Z,13Z,16Z,19Z-docosahexaenoyl)-sn-glycero-3-phosphocholine + octadecanoyl-CoA = 1-octadecanoyl-2-(4Z,7Z,10Z,13Z,16Z,19Z-docosahexaenoyl)-sn-glycero-3-phosphocholine + CoA. The enzyme catalyses 1-(9Z-octadecenoyl)-sn-glycero-3-phospho-L-serine + octadecanoyl-CoA = 1-(9Z-octadecenoyl)-2-octadecanoyl-sn-glycero-3-phospho-L-serine + CoA. It carries out the reaction a 2-acyl-sn-glycero-3-phosphoethanolamine + a fatty acyl-CoA = a 1,2-diacyl-sn-glycero-3-phosphoethanolamine + CoA. Its function is as follows. Lysophospholipid acyltransferase involved in fatty acyl chain remodeling of glycerophospholipids in the endoplasmic reticulum membrane. Selectively catalyzes the transfer and esterification of saturated long-chain fatty acids from acyl-CoA to the sn-1 position of 1-lyso-2-acyl phosphatidylethanolamines (1-lyso-PE, LPE), with a preference for stearoyl CoA over palmitoyl CoA as acyl donor. Acts in concert with an unknown phospholipase A1 to convert palmitate phosphatidylethanolamine (PE) species into stearate ones. Provides substrates to the PE methylation pathway, controlling stearate/palmitate composition of PE and phosphatidylcholine (PC) species with an overall impact on de novo hepatic lipid synthesis, body fat content and life span. Can acylate lysophosphatidylglycerols (LPG) using various saturated fatty acyl-CoAs as acyl donors. Can also acylate monoacylglycerols with a preference for 2-monoacylglycerols over 1-monoacylglycerols. Has no activity toward lysophosphatidic acids (LPA). In Homo sapiens (Human), this protein is Acyl-CoA:lysophosphatidylglycerol acyltransferase 1.